A 291-amino-acid polypeptide reads, in one-letter code: ATP synthase gamma chain (291 aa).

Belongs to the ATPase gamma chain family. F-type ATPases have 2 components, CF(1) - the catalytic core - and CF(0) - the membrane proton channel. CF(1) has five subunits: alpha(3), beta(3), gamma(1), delta(1), epsilon(1). CF(0) has three main subunits: a, b and c.

The protein resides in the cell membrane. In terms of biological role, produces ATP from ADP in the presence of a proton gradient across the membrane. The gamma chain is believed to be important in regulating ATPase activity and the flow of protons through the CF(0) complex. This chain is ATP synthase gamma chain, found in Streptococcus equi subsp. zooepidemicus (strain MGCS10565).